The following is a 715-amino-acid chain: ATP-dependent DNA helicase Hel308 (715 aa).

Positions M1–A29 match the Q motif motif. Residues Q28 and I46 to T53 each bind ATP. In terms of domain architecture, Helicase ATP-binding spans T33 to D197. Residues D145–H148 carry the DEAH box motif. The Helicase C-terminal domain occupies L229 to I422.

Belongs to the helicase family. Hel308 subfamily. Monomer.

The enzyme catalyses Couples ATP hydrolysis with the unwinding of duplex DNA by translocating in the 3'-5' direction.. It carries out the reaction ATP + H2O = ADP + phosphate + H(+). Its function is as follows. DNA-dependent ATPase and 3'-5' DNA helicase that may be involved in repair of stalled replication forks. The sequence is that of ATP-dependent DNA helicase Hel308 from Pyrococcus horikoshii (strain ATCC 700860 / DSM 12428 / JCM 9974 / NBRC 100139 / OT-3).